A 159-amino-acid chain; its full sequence is UPF0336 protein MAP_4107 (159 aa).

Belongs to the UPF0336 family.

The protein is UPF0336 protein MAP_4107 of Mycolicibacterium paratuberculosis (strain ATCC BAA-968 / K-10) (Mycobacterium paratuberculosis).